We begin with the raw amino-acid sequence, 1263 residues long: DNA-directed RNA polymerase subunit beta (1263 aa).

It belongs to the RNA polymerase beta chain family. As to quaternary structure, the RNAP catalytic core consists of 2 alpha, 1 beta, 1 beta' and 1 omega subunit. When a sigma factor is associated with the core the holoenzyme is formed, which can initiate transcription.

It carries out the reaction RNA(n) + a ribonucleoside 5'-triphosphate = RNA(n+1) + diphosphate. DNA-dependent RNA polymerase catalyzes the transcription of DNA into RNA using the four ribonucleoside triphosphates as substrates. The protein is DNA-directed RNA polymerase subunit beta of Thermotoga sp. (strain RQ2).